The chain runs to 619 residues: Kinesin light chain 4 (619 aa).

Serine 2 bears the N-acetylserine mark. Positions 32-150 (GLESLHSEHQ…EEEKKHLEFL (119 aa)) form a coiled coil. The stretch at 55-88 (QQGGHEEGLVHEKARQLRRSMENIELGLSEAQVM) is one TPR 1 repeat. Residues 156-175 (YDEDGHSMEEKEGDASKDSL) show a composition bias toward basic and acidic residues. The interval 156 to 200 (YDEDGHSMEEKEGDASKDSLDDLFPNEEEEDSSNDLSRGQGAAAA) is disordered. A Phosphoserine modification is found at serine 174. Residues 179–188 (FPNEEEEDSS) are compositionally biased toward acidic residues. TPR repeat units lie at residues 211–244 (LRTL…LERT), 253–286 (ATML…REST), 295–328 (AATL…REKV), 337–370 (AKQL…YERQ), and 379–412 (ARTK…AHVQ). The residue at position 460 (serine 460) is a Phosphoserine. Residues 464–497 (NTTLRNLGALYRRQGKLEAAETLEECALRSRKQG) form a TPR 7 repeat. 3 positions are modified to phosphoserine: serine 565, serine 566, and serine 590. Positions 571 to 619 (RKLQGTEPRPSSSNMKRAASLNYLNQPNAAPLQTSRGLSASTVDLSSSS) are disordered. Positions 592 to 608 (NYLNQPNAAPLQTSRGL) are enriched in polar residues. Positions 609–619 (SASTVDLSSSS) are enriched in low complexity. A Phosphothreonine modification is found at threonine 612.

Belongs to the kinesin light chain family. Oligomeric complex composed of two heavy chains and two light chains.

The protein resides in the cytoplasm. Its subcellular location is the cytoskeleton. Kinesin is a microtubule-associated force-producing protein that may play a role in organelle transport. The light chain may function in coupling of cargo to the heavy chain or in the modulation of its ATPase activity. The polypeptide is Kinesin light chain 4 (Klc4) (Rattus norvegicus (Rat)).